A 92-amino-acid polypeptide reads, in one-letter code: uncharacterized protein (92 aa).

Positions 1–92 constitute an HTH arsR-type domain; that stretch reads MNGNKDAIFK…LKNLLKGWIE (92 aa). A DNA-binding region (H-T-H motif) is located at residues 37–61; it reads IRLITKYDLSITRQAIAKHLSVLED.

This is an uncharacterized protein from Bacillus subtilis (strain 168).